The sequence spans 184 residues: ATP synthase subunit b, chloroplastic (184 aa).

A helical transmembrane segment spans residues L27–L49.

It belongs to the ATPase B chain family. As to quaternary structure, F-type ATPases have 2 components, F(1) - the catalytic core - and F(0) - the membrane proton channel. F(1) has five subunits: alpha(3), beta(3), gamma(1), delta(1), epsilon(1). F(0) has four main subunits: a(1), b(1), b'(1) and c(10-14). The alpha and beta chains form an alternating ring which encloses part of the gamma chain. F(1) is attached to F(0) by a central stalk formed by the gamma and epsilon chains, while a peripheral stalk is formed by the delta, b and b' chains.

Its subcellular location is the plastid. The protein resides in the chloroplast thylakoid membrane. F(1)F(0) ATP synthase produces ATP from ADP in the presence of a proton or sodium gradient. F-type ATPases consist of two structural domains, F(1) containing the extramembraneous catalytic core and F(0) containing the membrane proton channel, linked together by a central stalk and a peripheral stalk. During catalysis, ATP synthesis in the catalytic domain of F(1) is coupled via a rotary mechanism of the central stalk subunits to proton translocation. Its function is as follows. Component of the F(0) channel, it forms part of the peripheral stalk, linking F(1) to F(0). The sequence is that of ATP synthase subunit b, chloroplastic from Helianthus annuus (Common sunflower).